The following is a 335-amino-acid chain: ETS translocation variant 2 (335 aa).

Disordered stretches follow at residues 94-138 (DPWS…SWSH) and 201-220 (GHQS…SDRA). Residues 205 to 220 (PAFTTPSKSNKQSDRA) show a composition bias toward polar residues. Positions 234-314 (IQLWQFLLEL…GGRKYTYRFG (81 aa)) form a DNA-binding region, ETS.

Belongs to the ETS family. Testis.

The protein localises to the nucleus. Binds to DNA sequences containing the consensus pentanucleotide 5'-CGGA[AT]-3'. In Mus musculus (Mouse), this protein is ETS translocation variant 2 (Etv2).